A 1000-amino-acid polypeptide reads, in one-letter code: Vacuolar protein-sorting protein bro1 (1000 aa).

Positions 5-406 (PMISCPLKQT…EKVETADGEM (402 aa)) constitute a BRO1 domain. Positions 732–793 (YAEMTETVDS…RQLMERLSTE (62 aa)) form a coiled coil. 2 disordered regions span residues 760 to 857 (LLGQ…PYSQ) and 891 to 1000 (PIPA…NAWK). Basic and acidic residues predominate over residues 764–792 (IEREKAAGTSDHEEREREKLRQLMERLST). Polar residues predominate over residues 840–849 (VPQQHGTPVS). Pro residues-rich tracts occupy residues 898 to 922 (SPPP…PPVP) and 931 to 954 (YVPP…PFPS). The segment covering 981-991 (TGPSVSANSSD) has biased composition (polar residues).

This sequence belongs to the BRO1 family.

Its subcellular location is the cytoplasm. The protein resides in the endosome. Its function is as follows. Involved in concentration and sorting of cargo proteins of the multivesicular body (MVB) for incorporation into intralumenal vesicles. In Emericella nidulans (strain FGSC A4 / ATCC 38163 / CBS 112.46 / NRRL 194 / M139) (Aspergillus nidulans), this protein is Vacuolar protein-sorting protein bro1 (broA).